The following is a 134-amino-acid chain: Large ribosomal subunit protein bL20 (134 aa).

Belongs to the bacterial ribosomal protein bL20 family.

Binds directly to 23S ribosomal RNA and is necessary for the in vitro assembly process of the 50S ribosomal subunit. It is not involved in the protein synthesizing functions of that subunit. This is Large ribosomal subunit protein bL20 from Sinorhizobium fredii (strain NBRC 101917 / NGR234).